A 170-amino-acid chain; its full sequence is Arginine repressor (170 aa).

Belongs to the ArgR family.

Its subcellular location is the cytoplasm. It functions in the pathway amino-acid biosynthesis; L-arginine biosynthesis [regulation]. Its function is as follows. Regulates arginine biosynthesis genes. This is Arginine repressor from Bifidobacterium longum (strain NCC 2705).